The following is a 202-amino-acid chain: Putative 3-methyladenine DNA glycosylase (202 aa).

It belongs to the DNA glycosylase MPG family.

In Clostridioides difficile (strain 630) (Peptoclostridium difficile), this protein is Putative 3-methyladenine DNA glycosylase.